Consider the following 300-residue polypeptide: Small ribosomal subunit protein uS2 (300 aa).

The disordered stretch occupies residues 278-300 (GEAQTGNEGWGTEAAAPAATTQW).

This sequence belongs to the universal ribosomal protein uS2 family. In terms of assembly, component of the small ribosomal subunit. Mature ribosomes consist of a small (40S) and a large (60S) subunit. The 40S subunit contains about 33 different proteins and 1 molecule of RNA (18S). The 60S subunit contains about 49 different proteins and 3 molecules of RNA (25S, 5.8S and 5S). Interacts with rps21.

Its subcellular location is the cytoplasm. In terms of biological role, required for the assembly and/or stability of the 40S ribosomal subunit. Required for the processing of the 20S rRNA-precursor to mature 18S rRNA in a late step of the maturation of 40S ribosomal subunits. The protein is Small ribosomal subunit protein uS2 (rps0) of Pyrenophora tritici-repentis (strain Pt-1C-BFP) (Wheat tan spot fungus).